We begin with the raw amino-acid sequence, 145 residues long: Bacilliredoxin SERP1075 (145 aa).

Belongs to the bacilliredoxin family.

This is Bacilliredoxin SERP1075 from Staphylococcus epidermidis (strain ATCC 35984 / DSM 28319 / BCRC 17069 / CCUG 31568 / BM 3577 / RP62A).